Reading from the N-terminus, the 334-residue chain is Small ribosomal subunit protein RACK1z (334 aa).

WD repeat units lie at residues 16 to 47, 73 to 103, 115 to 145, 163 to 195, 207 to 237, 248 to 277, and 296 to 326; these read GHND…LVWD, GHSH…RLWD, GHDK…KLWN, GHNG…KVWN, GHGG…LLWD, DAGS…KIWD, and NQML…RIYK.

It belongs to the WD repeat G protein beta family. Ribosomal protein RACK1 subfamily. Interacts with RAC1, RAC3, RAC6, RAR1, SGT1 and RBOHB. Homodimer and heterodimer with RACK1B. In terms of tissue distribution, widely expressed.

It localises to the cytoplasm. The protein localises to the cell membrane. In terms of biological role, component of the RACK1 regulatory proteins that functions in innate immunity by interacting with multiple proteins in the RAC1 immune complex. Acts as a positive regulator of reactive oxygen species (ROS) production and is required for resistance against rice blast (M.grisea) infection. The protein is Small ribosomal subunit protein RACK1z (RACK1A) of Oryza sativa subsp. japonica (Rice).